We begin with the raw amino-acid sequence, 593 residues long: MAARQQLALLSVSEKAGLVEFARSLNALGLGLIASGGTATALRDAGLPVRDVSDLTGFPEMLGGRVKTLHPAVHAGILARNIPEDNADMNKQDFSLVRVVVCNLYPFVKTVSSPGVTVPEAVEKIDIGGVALLRAAAKNHARVTVVCDPADYSSVAKEMAASKDKDTSVETRRHLALKAFTHTAQYDAAISDYFRKEYSKGVSQLPLRYGMNPHQSPAQLYTTRPKLPLTVVNGSPGFINLCDALNAWQLVKELKQALGIPAAASFKHVSPAGAAVGIPLSEEEAQVCMVHDLHKTLTPLASAYARSRGADRMSSFGDFIALSDICDVPTAKIISREVSDGVVAPGYEEEALKILSKKKNGGYCVLQMDPNYEPDDNEIRTLYGLQLMQKRNNAVIDRSLFKNIVTKNKTLPESAVRDLIVASIAVKYTQSNSVCYAKDGQVIGIGAGQQSRIHCTRLAGDKANSWWLRHHPRVLSMKFKAGVKRAEVSNAIDQYVTGTIGEDEDLVKWQAMFEEVPAQLTEAEKKQWIAKLTAVSLSSDAFFPFRDNVDRAKRIGVQFIVAPSGSAADEVVIEACNELGITLIHTNLRLFHH.

The MGS-like domain occupies 1-147 (MAARQQLALL…KNHARVTVVC (147 aa)). The tract at residues 1–199 (MAARQQLALL…ISDYFRKEYS (199 aa)) is IMP cyclohydrolase. IMP is bound by residues 13–15 (SEK), 35–38 (SGGT), 65–68 (RVKT), 102–103 (CN), and 126–127 (DI). The active-site Proton donor/acceptor; for FAICAR cyclization activity is the K138. Position 200 is an N6-acetyllysine (K200). Residues 200 to 593 (KGVSQLPLRY…IHTNLRLFHH (394 aa)) form an AICAR formyltransferase region. 5-amino-1-(5-phospho-beta-D-ribosyl)imidazole-4-carboxamide is bound by residues 208–209 (RY), H268, G317, D340, N432, and R452. H268 functions as the Proton acceptor; for AICAR formyltransferase activity in the catalytic mechanism. (6R)-10-formyltetrahydrofolate is bound at residue I453. F542 is a binding site for 5-amino-1-(5-phospho-beta-D-ribosyl)imidazole-4-carboxamide. (6R)-10-formyltetrahydrofolate is bound by residues D547 and 566–567 (SA). Residue R589 participates in 5-amino-1-(5-phospho-beta-D-ribosyl)imidazole-4-carboxamide binding.

The protein belongs to the PurH family. As to quaternary structure, homodimer. Associates with internalized INSR complexes on Golgi/endosomal membranes. Interacts with INSR; ATIC together with PRKAA2/AMPK2 and HACD3/PTPLAD1 is proposed to be part of a signaling network regulating INSR autophosphorylation and endocytosis.

Its subcellular location is the cytoplasm. It is found in the cytosol. The enzyme catalyses (6R)-10-formyltetrahydrofolate + 5-amino-1-(5-phospho-beta-D-ribosyl)imidazole-4-carboxamide = 5-formamido-1-(5-phospho-D-ribosyl)imidazole-4-carboxamide + (6S)-5,6,7,8-tetrahydrofolate. The catalysed reaction is 10-formyldihydrofolate + 5-amino-1-(5-phospho-beta-D-ribosyl)imidazole-4-carboxamide = 5-formamido-1-(5-phospho-D-ribosyl)imidazole-4-carboxamide + 7,8-dihydrofolate. It carries out the reaction IMP + H2O = 5-formamido-1-(5-phospho-D-ribosyl)imidazole-4-carboxamide. The protein operates within purine metabolism; IMP biosynthesis via de novo pathway; 5-formamido-1-(5-phospho-D-ribosyl)imidazole-4-carboxamide from 5-amino-1-(5-phospho-D-ribosyl)imidazole-4-carboxamide (10-formyl THF route): step 1/1. Its pathway is purine metabolism; IMP biosynthesis via de novo pathway; IMP from 5-formamido-1-(5-phospho-D-ribosyl)imidazole-4-carboxamide: step 1/1. Its activity is regulated as follows. AMP and XMP inhibit AICAR formyltransferase activity. AICAR formyltransferase activity is competitively inhibited by 2-[5-hydroxy-3-methyl-1-(2-methyl-4-sulfo-phenyl)-1H-pyrazol-4-ylazo]-4-sulfo-benzoic acid (326203-A). FAICAR cyclization is competitively inhibited by 1,5-dihydroimidazo[4,5-c][1,2,6]thiadiazin-4(3H)-one-2,2-dioxide and the corresponding nucleoside and nucleoside monophosphate. Functionally, bifunctional enzyme that catalyzes the last two steps of purine biosynthesis. Acts as a transformylase that incorporates a formyl group to the AMP analog AICAR (5-amino-1-(5-phospho-beta-D-ribosyl)imidazole-4-carboxamide) to produce the intermediate formyl-AICAR (FAICAR). Can use both 10-formyldihydrofolate and 10-formyltetrahydrofolate as the formyl donor in this reaction. Also catalyzes the cyclization of FAICAR to inosine monophosphate (IMP). Promotes insulin receptor/INSR autophosphorylation and is involved in INSR internalization. This is Bifunctional purine biosynthesis protein ATIC (ATIC) from Gallus gallus (Chicken).